We begin with the raw amino-acid sequence, 173 residues long: RNA pyrophosphohydrolase (173 aa).

Residues 6 to 149 form the Nudix hydrolase domain; it reads GFRANVGIII…KRDVYRKVMK (144 aa). A Nudix box motif is present at residues 38–59; sequence GGVDDGETPEEAMYRELYEEVG.

This sequence belongs to the Nudix hydrolase family. RppH subfamily. It depends on a divalent metal cation as a cofactor.

In terms of biological role, accelerates the degradation of transcripts by removing pyrophosphate from the 5'-end of triphosphorylated RNA, leading to a more labile monophosphorylated state that can stimulate subsequent ribonuclease cleavage. This is RNA pyrophosphohydrolase from Shewanella woodyi (strain ATCC 51908 / MS32).